The following is a 265-amino-acid chain: V0 assembly protein 1 (265 aa).

Positions 1-24 (MVFGQLYALFIFTLSCCISKTVQA) are cleaved as a signal peptide. Over 25-223 (DSSKESSSFI…ILSSIWTEGL (199 aa)) the chain is Vacuolar. N-linked (GlcNAc...) asparagine glycosylation is found at asparagine 69, asparagine 104, and asparagine 172. Residues 224-244 (LMCLIVSALLLFILIVALSWI) traverse the membrane as a helical segment. Over 245 to 265 (SNLDITYGALEKSTNPIKKNN) the chain is Cytoplasmic. The ER retention motif motif lies at 262–265 (KKNN).

This sequence belongs to the VOA1 family. V-ATPase is a heteromultimeric enzyme composed of a peripheral catalytic V1 complex (components A to H) attached to an integral membrane V0 proton pore complex (components: a, c, c', c'', d, e, f and VOA1). Interacts with VMA21. Associates with the assembling V0 complex.

Its subcellular location is the vacuole membrane. It localises to the endoplasmic reticulum membrane. Accessory component of the V0 complex of vacuolar(H+)-ATPase (V-ATPase), a multisubunit enzyme composed of a peripheral complex (V1) that hydrolyzes ATP and a membrane integral complex (V0) that translocates protons. V-ATPase is responsible for acidifying and maintaining the pH of intracellular compartments. Functions with VMA21 in assembly of the V0 complex. The sequence is that of V0 assembly protein 1 (VOA1) from Saccharomyces cerevisiae (strain ATCC 204508 / S288c) (Baker's yeast).